Here is a 337-residue protein sequence, read N- to C-terminus: Ketol-acid reductoisomerase (NADP(+)) (337 aa).

One can recognise a KARI N-terminal Rossmann domain in the interval 3 to 183; that stretch reads LEMFYDDDAD…GGTRAGVIKT (181 aa). NADP(+) contacts are provided by residues 26–29, Lys-49, Ser-52, Ser-54, and 84–87; these read YGSQ and DTAQ. The active site involves His-109. NADP(+) is bound at residue Gly-135. One can recognise a KARI C-terminal knotted domain in the interval 184 to 329; it reads TFKDETETDL…KKLRDLMSWV (146 aa). Positions 192, 196, 228, and 232 each coordinate Mg(2+). Residue Ser-253 participates in substrate binding.

This sequence belongs to the ketol-acid reductoisomerase family. It depends on Mg(2+) as a cofactor.

The enzyme catalyses (2R)-2,3-dihydroxy-3-methylbutanoate + NADP(+) = (2S)-2-acetolactate + NADPH + H(+). It catalyses the reaction (2R,3R)-2,3-dihydroxy-3-methylpentanoate + NADP(+) = (S)-2-ethyl-2-hydroxy-3-oxobutanoate + NADPH + H(+). Its pathway is amino-acid biosynthesis; L-isoleucine biosynthesis; L-isoleucine from 2-oxobutanoate: step 2/4. It participates in amino-acid biosynthesis; L-valine biosynthesis; L-valine from pyruvate: step 2/4. Involved in the biosynthesis of branched-chain amino acids (BCAA). Catalyzes an alkyl-migration followed by a ketol-acid reduction of (S)-2-acetolactate (S2AL) to yield (R)-2,3-dihydroxy-isovalerate. In the isomerase reaction, S2AL is rearranged via a Mg-dependent methyl migration to produce 3-hydroxy-3-methyl-2-ketobutyrate (HMKB). In the reductase reaction, this 2-ketoacid undergoes a metal-dependent reduction by NADPH to yield (R)-2,3-dihydroxy-isovalerate. This chain is Ketol-acid reductoisomerase (NADP(+)), found in Mycobacterium bovis (strain BCG / Pasteur 1173P2).